Here is a 264-residue protein sequence, read N- to C-terminus: tRNA (guanine-N(1)-)-methyltransferase (264 aa).

Residues G125 and 145–150 (LGDFVL) contribute to the S-adenosyl-L-methionine site.

The protein belongs to the RNA methyltransferase TrmD family. As to quaternary structure, homodimer.

It is found in the cytoplasm. It catalyses the reaction guanosine(37) in tRNA + S-adenosyl-L-methionine = N(1)-methylguanosine(37) in tRNA + S-adenosyl-L-homocysteine + H(+). Specifically methylates guanosine-37 in various tRNAs. The protein is tRNA (guanine-N(1)-)-methyltransferase of Burkholderia ambifaria (strain ATCC BAA-244 / DSM 16087 / CCUG 44356 / LMG 19182 / AMMD) (Burkholderia cepacia (strain AMMD)).